The chain runs to 678 residues: DNA mismatch repair protein MutL (678 aa).

Belongs to the DNA mismatch repair MutL/HexB family.

Its function is as follows. This protein is involved in the repair of mismatches in DNA. It is required for dam-dependent methyl-directed DNA mismatch repair. May act as a 'molecular matchmaker', a protein that promotes the formation of a stable complex between two or more DNA-binding proteins in an ATP-dependent manner without itself being part of a final effector complex. The chain is DNA mismatch repair protein MutL from Lactiplantibacillus plantarum (strain ATCC BAA-793 / NCIMB 8826 / WCFS1) (Lactobacillus plantarum).